Consider the following 207-residue polypeptide: Sodium/potassium-transporting ATPase subunit beta-1-interacting protein 1 (207 aa).

The next 3 membrane-spanning stretches (helical) occupy residues 2–22 (GKCS…VAAL), 35–55 (APIL…FGTV), and 62–82 (LILY…IICF). Asparagine 100 carries an N-linked (GlcNAc...) asparagine glycan. Residues 147 to 167 (ALSSALQIFLALFGFVFACYV) form a helical membrane-spanning segment.

The protein belongs to the NKAIN family. In terms of assembly, interacts with ATP1B1 C-terminus. Detected in the brain only and specifically in neurons. Expressed in multiple regions such as cerebral cortex, thalamus, hippocampus, olfactory bulb and brainstem as well as in cerebellum with high expression in granular cell layer.

The protein resides in the cell membrane. This is Sodium/potassium-transporting ATPase subunit beta-1-interacting protein 1 (Nkain1) from Mus musculus (Mouse).